The sequence spans 194 residues: Granulocyte colony-stimulating factor (194 aa).

Residues 1 to 20 form the signal peptide; sequence KLMALQLLLWHSALWMVQEA. Intrachain disulfides connect Cys56–Cys62 and Cys84–Cys94. Thr153 carries an O-linked (GalNAc...) threonine glycan.

Belongs to the IL-6 superfamily. In terms of assembly, monomer. In terms of processing, O-glycosylated.

The protein localises to the secreted. In terms of biological role, granulocyte/macrophage colony-stimulating factors are cytokines that act in hematopoiesis by controlling the production, differentiation, and function of 2 related white cell populations of the blood, the granulocytes and the monocytes-macrophages. This CSF induces granulocytes. This is Granulocyte colony-stimulating factor (CSF3) from Felis catus (Cat).